The chain runs to 100 residues: Small ubiquitin-related modifier 1 (100 aa).

The segment covering 1-12 has biased composition (basic and acidic residues); sequence MSAAGEEDKKPA. The interval 1 to 23 is disordered; that stretch reads MSAAGEEDKKPAGGEGGGAHINL. The Ubiquitin-like domain occupies 19 to 96; that stretch reads AHINLKVKGQ…IDAMLHQTGG (78 aa). Glycine 96 is covalently cross-linked (Glycyl lysine isopeptide (Gly-Lys) (interchain with K-? in acceptor proteins)).

The protein belongs to the ubiquitin family. SUMO subfamily. As to quaternary structure, interacts with SAE2, SCE1 and SIZ1. Covalently attached to a number of proteins.

The protein localises to the nucleus. Its subcellular location is the cytoplasm. In terms of biological role, ubiquitin-like protein which can be covalently attached to target lysines as a monomer. Does not seem to be involved in protein degradation and may function as an antagonist of ubiquitin in the degradation process. The protein is Small ubiquitin-related modifier 1 (SUMO1) of Oryza sativa subsp. japonica (Rice).